Here is an 87-residue protein sequence, read N- to C-terminus: Mu-theraphotoxin-Cg1a (87 aa).

Residues 1 to 21 (MKVLVLITLAVLGAMFVWTSA) form the signal peptide. A propeptide spanning residues 22-50 (AELEERGSDQRDSPAWVKSMERIFQSEER) is cleaved from the precursor. 3 disulfides stabilise this stretch: Cys-52/Cys-66, Cys-59/Cys-71, and Cys-65/Cys-79.

The protein belongs to the neurotoxin 10 (Hwtx-1) family. 39 (Jztx-34) subfamily. Expressed by the venom gland.

It localises to the secreted. Its function is as follows. Potent and selective inhibitor of hNav1.7/SCN9A (IC(50)=610 nM). Also shows a weak activity towards Nav1.3/SCN3A (IC(50)=7950 nM). In addition, inhibits voltage-gated potassium channels (Kv) in rat DRG neurons. It does not alter the voltage dependence of activation, but it causes a small hyperpolarizing shift in the steady-state inactivations of Nav1.7/SNC9A. Chimera experiments show that the toxin binds to the DIIS3-S4 linker (site 4) of Nav1.7/SCN9A, whereas Nav1.7/SCN9A Asp-827 residue is shown by substitution experiments to be critical for its sensitivity. The toxin traps the domain II voltage sensor in the closed configuration, and not in an outward position. In vivo, shows analgesic activity in three rodent pain models (formalin-induced, acid-induced, and thermal). This Chilobrachys guangxiensis (Chinese earth tiger tarantula) protein is Mu-theraphotoxin-Cg1a.